The primary structure comprises 559 residues: Formate--tetrahydrofolate ligase (559 aa).

An ATP-binding site is contributed by 68–75 (TPAGEGKT).

It belongs to the formate--tetrahydrofolate ligase family.

It catalyses the reaction (6S)-5,6,7,8-tetrahydrofolate + formate + ATP = (6R)-10-formyltetrahydrofolate + ADP + phosphate. It functions in the pathway one-carbon metabolism; tetrahydrofolate interconversion. This Rhizobium etli (strain ATCC 51251 / DSM 11541 / JCM 21823 / NBRC 15573 / CFN 42) protein is Formate--tetrahydrofolate ligase.